Consider the following 92-residue polypeptide: Small ribosomal subunit protein uS19 (92 aa).

Belongs to the universal ribosomal protein uS19 family.

Its function is as follows. Protein S19 forms a complex with S13 that binds strongly to the 16S ribosomal RNA. The polypeptide is Small ribosomal subunit protein uS19 (Nitrobacter winogradskyi (strain ATCC 25391 / DSM 10237 / CIP 104748 / NCIMB 11846 / Nb-255)).